The primary structure comprises 203 residues: Venom allergen 5 (203 aa).

Disulfide bonds link cysteine 4-cysteine 15, cysteine 7-cysteine 100, cysteine 25-cysteine 93, and cysteine 169-cysteine 186. Residues 45-188 (KRHNEFRQKV…WHTHYLVCNY (144 aa)) form the SCP domain.

It belongs to the CRISP family. Venom allergen 5-like subfamily. Expressed by the venom gland.

Its subcellular location is the secreted. This chain is Venom allergen 5, found in Dolichovespula arenaria (Yellow hornet).